Reading from the N-terminus, the 826-residue chain is Ribonucleases P/MRP protein subunit POP1 (826 aa).

2 disordered regions span residues 1 to 24 (MATTANGNSKKRDGGLSSLAPRKI) and 49 to 91 (NKDF…SGGD). The Nuclear localization signal signature appears at 58-65 (KRRRTNSY). Residues 70–79 (AKKRNIKRQK) are compositionally biased toward basic residues.

Component of nuclear RNase P and RNase MRP ribonucleoproteins. RNase P consists of a catalytic RNA moiety and different protein chains. Several subunits of RNase P are also part of the RNase MRP complex. RNase MRP consists of a catalytic RNA moiety and several protein subunits.

The protein localises to the nucleus. It localises to the nucleolus. Its function is as follows. Component of ribonuclease P, a ribonucleoprotein complex that generates mature tRNA molecules by cleaving their 5'-ends. Also a component of the MRP ribonuclease complex, which cleaves pre-rRNA sequences. Required for rRNA maturation, including 5.8S rRNA processing. In Arabidopsis thaliana (Mouse-ear cress), this protein is Ribonucleases P/MRP protein subunit POP1.